The following is a 367-amino-acid chain: 2'-5'-oligoadenylate synthase 1A (367 aa).

Residues 14–61 (DKFIEDYLLPDTTFGADVKSAVNVVCDFLKERCFQGAAHPVRVSKVVK) are interaction with dsRNA. Serine 64 lines the ATP pocket. Residues aspartate 76, aspartate 78, and aspartate 149 each coordinate Mg(2+). Positions 201–211 (QRPTKLKSLIR) are interaction with dsRNA. ATP is bound by residues arginine 211, lysine 214, and glutamine 231. The S-geranylgeranyl cysteine moiety is linked to residue cysteine 364.

Belongs to the 2-5A synthase family. In terms of assembly, monomer. Homotetramer. Interacts with OAS1D; the interaction inhibits OAS1A catalytic activity. Mg(2+) serves as cofactor. C-terminal prenylated. In terms of tissue distribution, expressed in oocytes and granulosa cells of ovary, in intestine, stomach, spleen and uterus (at protein level). Expressed at high levels in the digestive tract and lymphoid organs. Expressed in ovary and spleen.

The protein resides in the cytoplasm. It localises to the mitochondrion. Its subcellular location is the nucleus. It is found in the microsome. The protein localises to the endoplasmic reticulum. The enzyme catalyses 3 ATP = 5'-triphosphoadenylyl-(2'-&gt;5')-adenylyl-(2'-&gt;5')-adenosine + 2 diphosphate. Its activity is regulated as follows. Produced as a latent enzyme which is activated by dsRNA generated during the course of viral infection. The dsRNA activator must be at least 15 nucleotides long, and no modification of the 2'-hydroxyl group is tolerated. ssRNA or dsDNA do not act as activators. In terms of biological role, interferon-induced, dsRNA-activated antiviral enzyme which plays a critical role in cellular innate antiviral response. In addition, it may also play a role in other cellular processes such as apoptosis, cell growth, differentiation and gene regulation. Synthesizes higher oligomers of 2'-5'-oligoadenylates (2-5A) from ATP which then bind to the inactive monomeric form of ribonuclease L (RNase L) leading to its dimerization and subsequent activation. Activation of RNase L leads to degradation of cellular as well as viral RNA, resulting in the inhibition of protein synthesis, thus terminating viral replication. Can mediate the antiviral effect via the classical RNase L-dependent pathway or an alternative antiviral pathway independent of RNase L. The protein is 2'-5'-oligoadenylate synthase 1A (Oas1a) of Mus musculus (Mouse).